Consider the following 284-residue polypeptide: RNA polymerase sigma factor RpoH (284 aa).

The sigma-70 factor domain-2 stretch occupies residues 54–123 (MVLAHLRFVV…IHEFILRNWR (70 aa)). Residues 78 to 81 (DLIQ) carry the Interaction with polymerase core subunit RpoC motif. Residues 229–280 (ALEGLDERSRDILQQRWLSEEKATLHDLAEKYNVSAERIRQLEKNAMSKLKG) are sigma-70 factor domain-4. Residues 253-272 (LHDLAEKYNVSAERIRQLEK) constitute a DNA-binding region (H-T-H motif).

It belongs to the sigma-70 factor family. RpoH subfamily. Interacts with the RNA polymerase core enzyme.

The protein resides in the cytoplasm. Sigma factors are initiation factors that promote the attachment of RNA polymerase to specific initiation sites and are then released. This sigma factor is involved in regulation of expression of heat shock genes. The chain is RNA polymerase sigma factor RpoH from Pseudomonas aeruginosa (strain ATCC 15692 / DSM 22644 / CIP 104116 / JCM 14847 / LMG 12228 / 1C / PRS 101 / PAO1).